The sequence spans 1422 residues: FH1/FH2 domain-containing protein 3 (1422 aa).

The GBD/FH3 domain maps to 18–411; sequence NSTNFPEPSR…NFGNNSYHSS (394 aa). Disordered regions lie at residues 323–464, 521–666, 687–708, 754–781, 821–849, 1262–1305, 1320–1357, and 1374–1410; these read RHED…RRRQ, ACLA…GVNG, RKSP…QEAE, SGDL…VQPK, LGHR…PPLL, QQKQ…SYAE, SSPS…SPNV, and TQVP…EEAR. Ser-345 is subject to Phosphoserine. Positions 357–366 are enriched in basic residues; that stretch reads LDRRRSRRHS. Polar residues predominate over residues 367-390; sequence VQSIKSTLSAPTSPCSQSAPSFKP. Position 375 is a phosphoserine (Ser-375). Low complexity predominate over residues 410–430; sequence SSRPSSGSSVPTTPTSSVSPP. The segment covering 438–449 has biased composition (polar residues); the sequence is SSPSGLLTSSFR. A coiled-coil region spans residues 448-480; it reads FRQHQESLAAERERRRQEREERLQRIEREERNK. Residues 450–464 show a composition bias toward basic and acidic residues; that stretch reads QHQESLAAERERRRQ. The span at 521–535 shows a compositional bias: low complexity; sequence ACLAPLSHSPSSSDS. Residues 536–547 are compositionally biased toward polar residues; that stretch reads QEALTVSASSPG. 2 stretches are compositionally biased toward acidic residues: residues 559–569 and 592–603; these read PEPESEAEPEA and ETEVEQALEQEP. Residues 604–624 are compositionally biased toward basic and acidic residues; that stretch reads EERASLSEKERQNEGVNERDN. The span at 626–635 shows a compositional bias: low complexity; sequence SASSVSSSSS. Positions 637 to 651 are enriched in basic and acidic residues; it reads LEREEKEDKLSRDRT. Ser-763 bears the Phosphoserine mark. A Phosphothreonine modification is found at Thr-775. Positions 827-849 are enriched in pro residues; it reads PGPPPPPPPTFLGLPPPPPPPLL. Residues 827–858 form the FH1 domain; the sequence is PGPPPPPPPTFLGLPPPPPPPLLDSIPPPPVP. Positions 883–1279 constitute an FH2 domain; it reads GQPTFTKKKK…HRERNKTRGK (397 aa). Over residues 1264–1278 the composition is skewed to basic residues; sequence KQKRANHRERNKTRG. Positions 1359 to 1391 constitute a DAD domain; it reads DDAADEIMDRIVKSATQVPSQRVVPRERKRSRA. Residues 1385–1400 show a composition bias toward basic residues; the sequence is ERKRSRANRKSLRRTL.

It belongs to the formin homology family. As to quaternary structure, interacts with nestin/NES-based interfilament (IF). Interacts with SQSTM1; isoform 4 threonine phosphorylation disrupts SQSTM1-binding. Phosphorylated on Thr-1474 and Thr-1476 by CK2. In terms of tissue distribution, expressed in the heart, kidney and brain. May be down-regulated in various types of heart diseases, including idiopathic dilated, ventricular dilated, familial dilated and perinatal dilated cardiomyopathies, as well as ischemic heart disease (at protein level).

The protein resides in the cytoplasm. Its subcellular location is the cytoskeleton. The protein localises to the myofibril. It localises to the sarcomere. It is found in the z line. Its function is as follows. Actin-organizing protein that may cause stress fiber formation together with cell elongation. Isoform 4 may play a role in actin filament polymerization in cardiomyocytes. The chain is FH1/FH2 domain-containing protein 3 (FHOD3) from Homo sapiens (Human).